Here is a 344-residue protein sequence, read N- to C-terminus: MTLILGLESSCDETAAALVTGDRRVLAHRVAGQEAEHRPYGGVVPEIAARAHVDRLAPIVEGVLDDAGVTLADVDAIAATAGPGLIGGVMVGLVTGKALAHAANKPLIAVNHLEGHALSPRLADPTLDFPYLLLLVSGGHCQLLLVKGVGDYRRLATTIDDAAGEAFDKTAKLLGLGYPGGPAVERIAAEGDPHAVPLPRPLVGSAEPHFSFAGLKSAVARAAASGTHDVADLAASFQQAVVDCLVDRSRGALAACPDARAFVVAGGVAANGAIRTALTDLAARFDKPFVAPPLWLCTDNGAMIAWAGAERFAAGLTDPLDTAARPRWPLDPAAEAVRGAGVKA.

2 residues coordinate Fe cation: H112 and H116. Substrate contacts are provided by residues 135–139, D168, G181, and N271; that span reads LVSGG. Residue D299 coordinates Fe cation.

Belongs to the KAE1 / TsaD family. Requires Fe(2+) as cofactor.

It localises to the cytoplasm. The catalysed reaction is L-threonylcarbamoyladenylate + adenosine(37) in tRNA = N(6)-L-threonylcarbamoyladenosine(37) in tRNA + AMP + H(+). Functionally, required for the formation of a threonylcarbamoyl group on adenosine at position 37 (t(6)A37) in tRNAs that read codons beginning with adenine. Is involved in the transfer of the threonylcarbamoyl moiety of threonylcarbamoyl-AMP (TC-AMP) to the N6 group of A37, together with TsaE and TsaB. TsaD likely plays a direct catalytic role in this reaction. The sequence is that of tRNA N6-adenosine threonylcarbamoyltransferase from Sphingopyxis alaskensis (strain DSM 13593 / LMG 18877 / RB2256) (Sphingomonas alaskensis).